The following is a 599-amino-acid chain: Elongation factor 4 (599 aa).

Residues 5-187 form the tr-type G domain; sequence DLIRNFSIVA…AIVTRLPPPK (183 aa). Residues 17-22 and 134-137 each bind GTP; these read DHGKST and NKID.

It belongs to the TRAFAC class translation factor GTPase superfamily. Classic translation factor GTPase family. LepA subfamily.

The protein localises to the cell inner membrane. It catalyses the reaction GTP + H2O = GDP + phosphate + H(+). In terms of biological role, required for accurate and efficient protein synthesis under certain stress conditions. May act as a fidelity factor of the translation reaction, by catalyzing a one-codon backward translocation of tRNAs on improperly translocated ribosomes. Back-translocation proceeds from a post-translocation (POST) complex to a pre-translocation (PRE) complex, thus giving elongation factor G a second chance to translocate the tRNAs correctly. Binds to ribosomes in a GTP-dependent manner. This is Elongation factor 4 from Cereibacter sphaeroides (strain ATCC 17025 / ATH 2.4.3) (Rhodobacter sphaeroides).